Here is a 387-residue protein sequence, read N- to C-terminus: Probable peptidoglycan glycosyltransferase FtsW (387 aa).

9 helical membrane-spanning segments follow: residues 20–40 (LYLLGAAVALMGLGWVMVGSA), 61–81 (LFLLLGLVTAFGVWRIRLAFW), 86–106 (PVMLLLGLGLLLLTLIPGIGV), 149–169 (TIRGFLFPVGVFAMAGLLLLL), 172–192 (DFGAVVVLFATLLGMLFLGGA), 194–214 (LWHFLLLAALGGASLAALAWY), 284–304 (LMGSLAVIALFVVFIYRVLLI), 322–342 (GLGIWIGLQAFINLGVNMGVL), and 349–369 (LPLMSAGGSSSIVTCVAVALI).

Belongs to the SEDS family. FtsW subfamily.

The protein resides in the cell inner membrane. The enzyme catalyses [GlcNAc-(1-&gt;4)-Mur2Ac(oyl-L-Ala-gamma-D-Glu-L-Lys-D-Ala-D-Ala)](n)-di-trans,octa-cis-undecaprenyl diphosphate + beta-D-GlcNAc-(1-&gt;4)-Mur2Ac(oyl-L-Ala-gamma-D-Glu-L-Lys-D-Ala-D-Ala)-di-trans,octa-cis-undecaprenyl diphosphate = [GlcNAc-(1-&gt;4)-Mur2Ac(oyl-L-Ala-gamma-D-Glu-L-Lys-D-Ala-D-Ala)](n+1)-di-trans,octa-cis-undecaprenyl diphosphate + di-trans,octa-cis-undecaprenyl diphosphate + H(+). Its pathway is cell wall biogenesis; peptidoglycan biosynthesis. Peptidoglycan polymerase that is essential for cell division. This chain is Probable peptidoglycan glycosyltransferase FtsW, found in Nitrosococcus halophilus (strain Nc4).